Here is a 131-residue protein sequence, read N- to C-terminus: Biogenesis of lysosome-related organelles complex 1 subunit CNL1 (131 aa).

The interval M1–G29 is disordered. A coiled-coil region spans residues D73 to Q101.

This sequence belongs to the BLOC1S4 family. As to quaternary structure, component of the biogenesis of lysosome-related organelles complex-1 (BLOC-1).

The protein localises to the cytoplasm. Component of the biogenesis of lysosome-related organelles complex-1 (BLOC-1), a complex that is involved in endosomal cargo sorting. The protein is Biogenesis of lysosome-related organelles complex 1 subunit CNL1 (CLN1) of Lachancea thermotolerans (strain ATCC 56472 / CBS 6340 / NRRL Y-8284) (Yeast).